The sequence spans 816 residues: Neuroligin-4, X-linked (816 aa).

Residues 1–41 form the signal peptide; the sequence is MSRPQGLLWLPLLFTPVCVMLNSNVLLWLTALAIKFTLIDS. Topologically, residues 42-676 are extracellular; the sequence is QAQYPVVNTN…TKRDYSTELS (635 aa). The N-linked (GlcNAc...) asparagine glycan is linked to Asn-102. 2 cysteine pairs are disulfide-bonded: Cys-110–Cys-146 and Cys-306–Cys-317. The segment at 359-364 is interaction with NRXN1; the sequence is QGEFLN. Cys-476 and Cys-510 are joined by a disulfide. A glycan (N-linked (GlcNAc...) asparagine) is linked at Asn-511. The disordered stretch occupies residues 636 to 659; it reads TKRPAITPANNPKHSKDPHKTGPE. A compositionally biased stretch (basic and acidic residues) spans 649 to 658; the sequence is HSKDPHKTGP. A helical membrane pass occupies residues 677–697; the sequence is VTIAVGASLLFLNILAFAALY. The Cytoplasmic segment spans residues 698 to 816; sequence YKKDKRRHET…LPHGHSTTRV (119 aa). Residue Ser-712 is modified to Phosphoserine.

The protein belongs to the type-B carboxylesterase/lipase family. Homodimer. Interacts with NRXN1 in a calcium-dependent manner. Interaction with neurexins is mediated by heparan sulfate glycan modification on neurexin. Interacts through its C-terminus with DLG4/PSD-95 third PDZ domain. Expressed at highest levels in heart. Expressed at lower levels in liver, skeletal muscle and pancreas and at very low levels in brain.

It is found in the cell membrane. The protein resides in the postsynaptic density membrane. In terms of biological role, cell surface protein involved in cell-cell-interactions via its interactions with neurexin family members. This chain is Neuroligin-4, X-linked (NLGN4X), found in Homo sapiens (Human).